The sequence spans 442 residues: UDP-N-acetylmuramate--L-alanine ligase (442 aa).

109 to 115 (GAHGKTS) contacts ATP.

Belongs to the MurCDEF family.

It localises to the cytoplasm. The catalysed reaction is UDP-N-acetyl-alpha-D-muramate + L-alanine + ATP = UDP-N-acetyl-alpha-D-muramoyl-L-alanine + ADP + phosphate + H(+). Its pathway is cell wall biogenesis; peptidoglycan biosynthesis. In terms of biological role, cell wall formation. This chain is UDP-N-acetylmuramate--L-alanine ligase, found in Streptococcus pyogenes serotype M28 (strain MGAS6180).